Here is a 284-residue protein sequence, read N- to C-terminus: Tropomyosin (284 aa).

A coiled-coil region spans residues methionine 1–tyrosine 284. Residues threonine 110–asparagine 142 are compositionally biased toward basic and acidic residues. The tract at residues threonine 110–threonine 143 is disordered.

It belongs to the tropomyosin family.

Tropomyosin, in association with the troponin complex, plays a central role in the calcium dependent regulation of muscle contraction. This Anisakis simplex (Herring worm) protein is Tropomyosin.